The sequence spans 481 residues: Hyaluronidase-4 (481 aa).

Residues methionine 1–leucine 11 lie on the Cytoplasmic side of the membrane. Residues cysteine 12–isoleucine 32 form a helical membrane-spanning segment. At serine 33 to proline 455 the chain is on the extracellular side. Cystine bridges form between cysteine 59–cysteine 351, cysteine 223–cysteine 237, cysteine 376–cysteine 387, cysteine 381–cysteine 435, and cysteine 437–cysteine 446. Asparagine 64 and asparagine 115 each carry an N-linked (GlcNAc...) asparagine glycan. Glutamate 147 acts as the Proton donor in catalysis. Residues asparagine 232 and asparagine 343 are each glycosylated (N-linked (GlcNAc...) asparagine). A helical membrane pass occupies residues serine 456–tyrosine 476. The Cytoplasmic segment spans residues glutamine 477 to leucine 481.

This sequence belongs to the glycosyl hydrolase 56 family.

Its subcellular location is the membrane. The enzyme catalyses Random hydrolysis of (1-&gt;4)-linkages between N-acetyl-beta-D-glucosamine and D-glucuronate residues in hyaluronate.. Functionally, endo-hyaluronidase that degrades hyaluronan to smaller oligosaccharide fragments. Also has chondroitin sulfate hydrolase activity, The best substrate being the galactosaminidic linkage in the sequence of a trisulfated tetrasaccharide. The chain is Hyaluronidase-4 (Hyal4) from Mus musculus (Mouse).